The chain runs to 224 residues: Putative adhesin A1C_06425 (224 aa).

A signal peptide spans 1–22; the sequence is MKKLLLIATTSATILSSSISFA.

This chain is Putative adhesin A1C_06425, found in Rickettsia akari (strain Hartford).